A 250-amino-acid chain; its full sequence is Osmotin-like protein OSML15 (250 aa).

The N-terminal stretch at 1-21 (MSHLTTCLVFFLLAFVTYTNA) is a signal peptide. 8 disulfides stabilise this stretch: Cys-31–Cys-226, Cys-73–Cys-83, Cys-88–Cys-94, Cys-142–Cys-214, Cys-147–Cys-197, Cys-155–Cys-165, Cys-169–Cys-178, and Cys-179–Cys-184.

This sequence belongs to the thaumatin family.

This is Osmotin-like protein OSML15 from Solanum commersonii (Commerson's wild potato).